A 459-amino-acid polypeptide reads, in one-letter code: UNC93-like protein 1 (459 aa).

The interval 1-26 (MNVRDEGKTTAEKHGGGEENKSPENK) is disordered. 11 consecutive transmembrane segments (helical) span residues 38 to 58 (LMGF…GMGG), 73 to 93 (AVYT…NVLG), 96 to 116 (LTLA…LYYN), 122 to 142 (AFAI…WAGE), 159 to 179 (IALF…IPFI), 195 to 215 (YIAF…ILPA), 251 to 271 (LLIV…FNNV), 287 to 307 (FYWG…DFSF), 314 to 334 (GFTG…GGLA), 355 to 375 (GIEF…DAMY), and 425 to 445 (LIVN…LVYF).

It belongs to the unc-93 family.

It localises to the membrane. In Arabidopsis thaliana (Mouse-ear cress), this protein is UNC93-like protein 1.